Reading from the N-terminus, the 198-residue chain is uncharacterized protein (198 aa).

A coiled-coil region spans residues 20–58 (ERVRRDEELARLSADKEQAKNDLEESKRRIARLRGTVYE). The disordered stretch occupies residues 144-198 (LSNRKTKNPESDRRRQSRKKKSTQIQASDEMKHRRHHVHKVHHYSQKQSSSTTRR). Residues 176–188 (HRRHHVHKVHHYS) are compositionally biased toward basic residues. A compositionally biased stretch (polar residues) spans 189–198 (QKQSSSTTRR).

The protein resides in the nucleus. Its subcellular location is the nucleolus. This is an uncharacterized protein from Schizosaccharomyces pombe (strain 972 / ATCC 24843) (Fission yeast).